The primary structure comprises 104 residues: N(4)-acetylcytidine amidohydrolase (104 aa).

Residues 6-94 enclose the ASCH domain; that stretch reads ITFFQRFQND…IAEIYPNQTQ (89 aa). Lys21 serves as the catalytic Proton acceptor. The active-site Nucleophile is the Thr24. Glu74 functions as the Proton donor in the catalytic mechanism.

It belongs to the N(4)-acetylcytidine amidohydrolase family.

The enzyme catalyses N(4)-acetylcytidine + H2O = cytidine + acetate + H(+). The catalysed reaction is N(4)-acetyl-2'-deoxycytidine + H2O = 2'-deoxycytidine + acetate + H(+). It catalyses the reaction N(4)-acetylcytosine + H2O = cytosine + acetate + H(+). In terms of biological role, catalyzes the hydrolysis of N(4)-acetylcytidine (ac4C). This is N(4)-acetylcytidine amidohydrolase (yqfB) from Salmonella dublin (strain CT_02021853).